The primary structure comprises 90 residues: UPF0367 protein SYNPCC7002_A0153 (90 aa).

This sequence belongs to the UPF0367 family.

The chain is UPF0367 protein SYNPCC7002_A0153 from Picosynechococcus sp. (strain ATCC 27264 / PCC 7002 / PR-6) (Agmenellum quadruplicatum).